We begin with the raw amino-acid sequence, 333 residues long: MHSSIVLAIVLFVAIASASKTRELCMKSLEHAKVGTSKEAKQDGIDLYKHMFEHYPAMKKYFKHRENYTPADVQKDPFFIKQGQNILLACHVLCATYDDRETFDAYVGELMARHERDHVKIPNDVWNHFWEHFIEFLGSKTTLDEPTKHAWQEIGKEFSHEISHHGRHSVRDHCMNSLEYIAIGDKEHQKQNGIDLYKHMFEHYPHMRKAFKGRENFTKEDVQKDAFFVKQGHKILLALRMLCSSYDDEPTFDYFVDALMDRHIKDDIHLPQEQWHEFWKLFAEYLNEKSHQHLTEAEKHAWSTIGEDFAHEADKHAKAEKDHHEGEHKEEHH.

Positions 1–18 (MHSSIVLAIVLFVAIASA) are cleaved as a signal peptide. Globin domains lie at 25-167 (CMKS…HHGR) and 174-318 (CMNS…KHAK). Heme b-binding residues include Q82 and H114. N-linked (GlcNAc...) asparagine glycosylation is present at N216. Positions 231 and 263 each coordinate heme b. Residues 314–333 (DKHAKAEKDHHEGEHKEEHH) form a disordered region.

Belongs to the globin family. Homooctamer.

Its subcellular location is the secreted. It is found in the extracellular space. The polypeptide is Extracellular globin (Pseudoterranova decipiens (Sealworm)).